Reading from the N-terminus, the 308-residue chain is MTMPDYDLIAILGPTASGKTPFAAALAAELNTEIISADSRQIYRGMDLGTGKDLEDYTINGRQIPYHLIDIADPGYKYNVFEYQRDFLTAYETIKQKGCLPVLCGGTGLYLESVLKGYRLIPVPENQELRVRLAEKSLEELTAILSSYKTLHNSTDVDTVKRAIRAIEIEEYYAKTPIEEREFPQLNSLIIGVDIDRELRREKITRRLKQRLDDGMVEEVRRLLAEGIQPDDLIYYGLEYKYLTLYAIGKMTYDEMFTGLETAIHQFAKRQMTWFRGMERRGFTIHWVDASLPMEEKINFVKQKLKEF.

13 to 20 lines the ATP pocket; that stretch reads GPTASGKT. Substrate is bound at residue 15–20; sequence TASGKT. An interaction with substrate tRNA region spans residues 38 to 41; the sequence is DSRQ.

It belongs to the IPP transferase family. Monomer. Requires Mg(2+) as cofactor.

It carries out the reaction adenosine(37) in tRNA + dimethylallyl diphosphate = N(6)-dimethylallyladenosine(37) in tRNA + diphosphate. Its function is as follows. Catalyzes the transfer of a dimethylallyl group onto the adenine at position 37 in tRNAs that read codons beginning with uridine, leading to the formation of N6-(dimethylallyl)adenosine (i(6)A). This chain is tRNA dimethylallyltransferase 2, found in Bacteroides fragilis (strain YCH46).